The sequence spans 442 residues: HTH-type transcriptional regulator NorG (442 aa).

Residues Lys2–Tyr46 enclose the HTH gntR-type domain. The H-T-H motif DNA-binding region spans Gln6–Glu25. The residue at position 288 (Lys288) is an N6-(pyridoxal phosphate)lysine.

This sequence in the C-terminal section; belongs to the class-I pyridoxal-phosphate-dependent aminotransferase family. It depends on pyridoxal 5'-phosphate as a cofactor.

Positively regulates the expression of the NorB efflux pump and negatively regulates the expression of the AbcA efflux pump. Binds specifically to the promoters of norA, norB and norC and abcA genes. Could also have an aminotransferase activity. This is HTH-type transcriptional regulator NorG (norG) from Staphylococcus aureus (strain bovine RF122 / ET3-1).